We begin with the raw amino-acid sequence, 363 residues long: Cleavage and termination factor 1 (363 aa).

In terms of domain architecture, RRM spans 7-85 (NVVFVGNIPY…RKIRVEFPSN (79 aa)). A disordered region spans residues 291–325 (QPASATSSPPSVPQKIPSSNHKSQQANGSDQGNEG). Over residues 306–322 (IPSSNHKSQQANGSDQG) the composition is skewed to polar residues.

Interacts with res2.

It is found in the nucleus. In terms of biological role, component of the cleavage factor I (CF I) involved in pre-mRNA 3'-end processing. This is Cleavage and termination factor 1 (ctf1) from Schizosaccharomyces pombe (strain 972 / ATCC 24843) (Fission yeast).